Here is a 392-residue protein sequence, read N- to C-terminus: MESSEPLVLDVGNLKRGEIIINMGPQHPSTHGVLRLEILTDGEIVKDVIPHMGYLHRCYEKHAEKLPYNQVIPFVDRMDYLAAMNSEHAYAMGVERMLGIENDIPKRVEYIRVLVAELNRISSHFVAIGTYGLDIGAFTPFLWVMRDREHINRLLEWVSGARMLYNYIWVGGLFYDLPVGFEERCKDFISYLKPKLAELQKVIIDNKIFIERTANIGVLPLDLAINYGITGPMLRASGLKFDLRKVDAYSVYPEIDFDIPVGTGAVGTTGDCWDRTHVRVAECFESVKIIEQCLEKLLGEHKRTREFDPQAIVPKKIRPKVMDFYVRAENPKGELGFFFRTTGNTDIPFRCKVRAPSFVNLSVLQAISKNVMIADLVAILGSFDIVMGEIDR.

The protein belongs to the complex I 49 kDa subunit family. In terms of assembly, NDH-1 is composed of 14 different subunits. Subunits NuoB, C, D, E, F, and G constitute the peripheral sector of the complex.

The protein resides in the cell inner membrane. It carries out the reaction a quinone + NADH + 5 H(+)(in) = a quinol + NAD(+) + 4 H(+)(out). Its function is as follows. NDH-1 shuttles electrons from NADH, via FMN and iron-sulfur (Fe-S) centers, to quinones in the respiratory chain. The immediate electron acceptor for the enzyme in this species is believed to be a menaquinone. Couples the redox reaction to proton translocation (for every two electrons transferred, four hydrogen ions are translocated across the cytoplasmic membrane), and thus conserves the redox energy in a proton gradient. This is NADH-quinone oxidoreductase subunit D 1 from Cytophaga hutchinsonii (strain ATCC 33406 / DSM 1761 / CIP 103989 / NBRC 15051 / NCIMB 9469 / D465).